We begin with the raw amino-acid sequence, 32 residues long: Chaperone protein DnaK (32 aa).

Belongs to the heat shock protein 70 family.

Acts as a chaperone. The chain is Chaperone protein DnaK from Anabaena sp. (strain L31).